A 119-amino-acid polypeptide reads, in one-letter code: Large ribosomal subunit protein bL20 (119 aa).

This sequence belongs to the bacterial ribosomal protein bL20 family.

In terms of biological role, binds directly to 23S ribosomal RNA and is necessary for the in vitro assembly process of the 50S ribosomal subunit. It is not involved in the protein synthesizing functions of that subunit. This chain is Large ribosomal subunit protein bL20, found in Gluconacetobacter diazotrophicus (strain ATCC 49037 / DSM 5601 / CCUG 37298 / CIP 103539 / LMG 7603 / PAl5).